Here is a 376-residue protein sequence, read N- to C-terminus: Histidinol-phosphate aminotransferase 1 (376 aa).

Lys-235 is subject to N6-(pyridoxal phosphate)lysine.

It belongs to the class-II pyridoxal-phosphate-dependent aminotransferase family. Histidinol-phosphate aminotransferase subfamily. As to quaternary structure, homodimer. Pyridoxal 5'-phosphate serves as cofactor.

The catalysed reaction is L-histidinol phosphate + 2-oxoglutarate = 3-(imidazol-4-yl)-2-oxopropyl phosphate + L-glutamate. It participates in amino-acid biosynthesis; L-histidine biosynthesis; L-histidine from 5-phospho-alpha-D-ribose 1-diphosphate: step 7/9. The polypeptide is Histidinol-phosphate aminotransferase 1 (Cupriavidus pinatubonensis (strain JMP 134 / LMG 1197) (Cupriavidus necator (strain JMP 134))).